A 122-amino-acid polypeptide reads, in one-letter code: Large ribosomal subunit protein uL22 (122 aa).

This sequence belongs to the universal ribosomal protein uL22 family. As to quaternary structure, part of the 50S ribosomal subunit.

This protein binds specifically to 23S rRNA; its binding is stimulated by other ribosomal proteins, e.g. L4, L17, and L20. It is important during the early stages of 50S assembly. It makes multiple contacts with different domains of the 23S rRNA in the assembled 50S subunit and ribosome. Its function is as follows. The globular domain of the protein is located near the polypeptide exit tunnel on the outside of the subunit, while an extended beta-hairpin is found that lines the wall of the exit tunnel in the center of the 70S ribosome. This Caldicellulosiruptor saccharolyticus (strain ATCC 43494 / DSM 8903 / Tp8T 6331) protein is Large ribosomal subunit protein uL22.